The following is a 225-amino-acid chain: SKNWKLSIRCGGYTLKVLMENKLLPEPPSTRKKRILESHNNTLVDPCEEHKKKNPDASVKFSEFLKKCSEMWKTIFAKEKGKFEDMAKADKAHYEREMKTYIPPKGEKKKKFKDPNAPKRPPLAFFLFCSEYRPKIKGEHPGLSIDDVVKKLAGMWNNTAAADKQFYEKKAAKLKEKYKKDIAAYRAKGMPNSAKKRAVKAEKSKKKREEEEDEEDEQEEENEEE.

An SAND domain is found at 1–25; that stretch reads SKNWKLSIRCGGYTLKVLMENKLLP. 2 DNA-binding regions (HMG box) span residues 26–102 and 118–186; these read EPPS…KTYI and PKRP…AAYR. The Nuclear localization signal motif lies at 66 to 83; it reads KKCSEMWKTIFAKEKGKF. Positions 157–224 form a coiled coil; it reads NNTAAADKQF…EDEQEEENEE (68 aa). Residues 185–225 are disordered; sequence YRAKGMPNSAKKRAVKAEKSKKKREEEEDEEDEQEEENEEE. Residues 194–206 are compositionally biased toward basic residues; that stretch reads AKKRAVKAEKSKK. The span at 210 to 225 shows a compositional bias: acidic residues; it reads EEEDEEDEQEEENEEE.

Homodimer. Interacts with members of the HP1 family of nonhistone chromosomal protein, such as CBX5 and CBX3 via the PxVxL motif. Interacts with ETS1; the interaction is direct and modulates ETS1 transcriptional activity. Interacts with the MRN complex which is composed of two heterodimers RAD50/MRE11 associated with a single NBN; recruits the complex to PML-related bodies. Interacts with HIPK2; positively regulates TP53-dependent transcription. Interacts with CASP8AP2; may negatively regulate CASP8AP2 export from the nucleus to the cytoplasm. Post-translationally, sumoylated. Sumoylated with SUMO1. Sumoylation depends on a functional nuclear localization signal but is not necessary for nuclear import or nuclear body targeting. Sumoylation may stabilize the interaction with CBX5. Phosphorylated.

The protein localises to the nucleus. It localises to the PML body. The protein resides in the nuclear body. It is found in the cytoplasm. Together with PML, this tumor suppressor is a major constituent of the PML bodies, a subnuclear organelle involved in a large number of physiological processes including cell growth, differentiation and apoptosis. Functions as a transcriptional coactivator of ETS1 and ETS2. Under certain conditions, it may also act as a corepressor of ETS1 preventing its binding to DNA. Through the regulation of ETS1 it may play a role in angiogenesis, controlling endothelial cell motility and invasion. Through interaction with the MRN complex it may be involved in the regulation of telomeres lengthening. May also regulate TP53-mediated transcription and through CASP8AP2, regulate FAS-mediated apoptosis. May also play a role in infection by viruses through mechanisms that may involve chromatin and/or transcriptional regulation. This chain is Nuclear autoantigen Sp-100 (SP100), found in Gorilla gorilla gorilla (Western lowland gorilla).